A 39-amino-acid chain; its full sequence is Cytochrome b559 subunit beta (39 aa).

A helical membrane pass occupies residues Trp14 to Ser30. His18 contributes to the heme binding site.

Belongs to the PsbE/PsbF family. Heterodimer of an alpha subunit and a beta subunit. PSII is composed of 1 copy each of membrane proteins PsbA, PsbB, PsbC, PsbD, PsbE, PsbF, PsbH, PsbI, PsbJ, PsbK, PsbL, PsbM, PsbT, PsbX, PsbY, PsbZ, Psb30/Ycf12, at least 3 peripheral proteins of the oxygen-evolving complex and a large number of cofactors. It forms dimeric complexes. The cofactor is heme b.

Its subcellular location is the plastid. The protein localises to the chloroplast thylakoid membrane. Its function is as follows. This b-type cytochrome is tightly associated with the reaction center of photosystem II (PSII). PSII is a light-driven water:plastoquinone oxidoreductase that uses light energy to abstract electrons from H(2)O, generating O(2) and a proton gradient subsequently used for ATP formation. It consists of a core antenna complex that captures photons, and an electron transfer chain that converts photonic excitation into a charge separation. The polypeptide is Cytochrome b559 subunit beta (Nicotiana glutinosa (Tobacco)).